A 328-amino-acid polypeptide reads, in one-letter code: MSSPIKIAVTGAAGQIGYSLLFRIASGALFGGDTPVQLRLLEITPALKALEGVVMELDDCAFPALDSVEIGDDADHIFDGVTLALLVGARPRSKGMERGDLLSANGAIFTAQGKALNRVAADDVRIGVTGNPANTNALIAMSNAPDIPASRFSALTRLDHNRAIGQLAAKTHARVGDIRKMTVWGNHSATQYPDIFHAEVAGRNAAEVVNDQDWIENEFIPTVAGRGAAIIEARGASSAASAASATIDAARDWLLGTPEGDWVSMAVASDGSYGVPEGLMYSYPVTTSGGNWEIVEGLEVNDFSRRKMDATAAELFDERAAVANLGLI.

Residue 11-17 coordinates NAD(+); sequence GAAGQIG. 2 residues coordinate substrate: arginine 92 and arginine 98. NAD(+) is bound by residues asparagine 105, glutamine 112, and 129-131; that span reads TGN. Positions 131 and 162 each coordinate substrate. The active-site Proton acceptor is the histidine 187.

It belongs to the LDH/MDH superfamily. MDH type 2 family.

The enzyme catalyses (S)-malate + NAD(+) = oxaloacetate + NADH + H(+). In terms of biological role, catalyzes the reversible oxidation of malate to oxaloacetate. The sequence is that of Malate dehydrogenase from Paenarthrobacter aurescens (strain TC1).